A 123-amino-acid chain; its full sequence is DPEP2 neighbor protein (123 aa).

A disordered region spans residues 67 to 123; the sequence is APLATPTKAEAEKPAPRRAPKRRQATIESDKDLGCSSPKIRRLEHRGRRLTPQKLAG. The segment covering 105-117 has biased composition (basic residues); it reads KIRRLEHRGRRLT.

In Homo sapiens (Human), this protein is DPEP2 neighbor protein.